We begin with the raw amino-acid sequence, 289 residues long: Probable aquaporin PIP-type 7a (289 aa).

Positions 1-39 (MEAKEQDVSLGANKFPERQPLGIAAQSQDEPKDYQEPPP) are disordered. Topologically, residues 1 to 57 (MEAKEQDVSLGANKFPERQPLGIAAQSQDEPKDYQEPPPAPLFEPSELTSWSFYRAG) are cytoplasmic. A helical membrane pass occupies residues 58–78 (IAEFIATFLFLYITVLTVMGV). The Extracellular portion of the chain corresponds to 79–91 (VRESSKCKTVGIQ). Residues 92 to 112 (GIAWAFGGMIFALVYCTAGIS) form a helical membrane-spanning segment. Residues 113–135 (GGHINPAVTFGLFLARKLSLTRA) lie on the Cytoplasmic side of the membrane. The short motif at 117 to 119 (NPA) is the NPA 1 element. A helical transmembrane segment spans residues 136 to 156 (IFYMVMQVLGAICGAGVVKGF). The Extracellular segment spans residues 157 to 178 (EGKQRFGDLNGGANFVAPGYTK). The helical transmembrane segment at 179–199 (GDGLGAEIVGTFILVYTVFSA) threads the bilayer. Residues 200 to 212 (TDAKRSARDSHVP) are Cytoplasmic-facing. A helical membrane pass occupies residues 213–233 (ILAPLPIGFAVFLVHLATIPI). At 234–260 (TGTGINPARSLGAAIVFNKKIGWNDHW) the chain is on the extracellular side. The NPA 2 motif lies at 239-241 (NPA). The chain crosses the membrane as a helical span at residues 261–281 (IFWVGPFIGAALAALYHQVVI). Topologically, residues 282 to 289 (RAIPFKSK) are cytoplasmic.

This sequence belongs to the MIP/aquaporin (TC 1.A.8) family. PIP (TC 1.A.8.11) subfamily.

The protein localises to the cell membrane. In terms of biological role, aquaporins facilitate the transport of water and small neutral solutes across cell membranes. In Pisum sativum (Garden pea), this protein is Probable aquaporin PIP-type 7a (TRG-31).